We begin with the raw amino-acid sequence, 377 residues long: Guanine nucleotide-binding protein subunit alpha-13 (377 aa).

Residues cysteine 14 and cysteine 18 are each lipidated (S-palmitoyl cysteine). The 331-residue stretch at 47-377 folds into the G-alpha domain; that stretch reads RLVKILLLGA…HDNLKQLMLQ (331 aa). The G1 motif stretch occupies residues 50 to 63; it reads KILLLGAGESGKST. GTP-binding positions include 58-63, serine 173, and 197-200; these read ESGKST and LLAR. Residue serine 62 coordinates Mg(2+). Residues 195–203 are G2 motif; that stretch reads DILLARRPT. Residue threonine 203 coordinates Mg(2+). The residue at position 203 (threonine 203) is a Phosphothreonine; by PKA. The G3 motif stretch occupies residues 218–227; the sequence is FKMVDVGGQR. Residues 287–294 are G4 motif; that stretch reads ILFLNKTD. GTP is bound by residues 291-294 and alanine 349; that span reads NKTD. Residues 347–352 form a G5 motif region; sequence TTAINT.

The protein belongs to the G-alpha family. G(12) subfamily. As to quaternary structure, g proteins are composed of 3 units; alpha, beta and gamma. The alpha chain contains the guanine nucleotide binding site. Interacts with UBXD5. Interacts with HAX1. Interacts (in GTP-bound form) with PPP5C (via TPR repeats); activates PPP5C phosphatase activity and translocates PPP5C to the cell membrane. Interacts with RGS22. Interacts (in GTP-bound form) with ARHGEF1. Interacts (in GTP-bound form) with ARHGEF11 (via RGS domain). Interacts (in GTP-bound form) with ARHGEF12 (via RGS domain). Interacts with CTNND1. Interacts with GASL2L2. Interacts with GPR35. Interacts with GPR174. In terms of processing, palmitoylation is critical for proper membrane localization and signaling. Phosphorylation on Thr-203 by PKA destabilizes the heterotrimer of alpha, beta and gamma, and inhibits Rho activation. In terms of tissue distribution, expressed in testis, including in Leydig cells and in the seminiferous epithelium, in differentiating cells from the spermatogonia to mature spermatozoa stages and round spermatids (at protein level). Expressed in 99.2% of spermatozoa from healthy individuals, but only in 28.6% of macrocephalic spermatozoa from infertile patients (at protein level).

It localises to the cell membrane. It is found in the melanosome. The protein resides in the cytoplasm. The protein localises to the nucleus. Its function is as follows. Guanine nucleotide-binding proteins (G proteins) are involved as modulators or transducers in various transmembrane signaling systems. Activates effector molecule RhoA by binding and activating RhoGEFs (ARHGEF1/p115RhoGEF, ARHGEF11/PDZ-RhoGEF and ARHGEF12/LARG). GNA13-dependent Rho signaling subsequently regulates transcription factor AP-1 (activating protein-1). Promotes tumor cell invasion and metastasis by activating RhoA/ROCK signaling pathway. Inhibits CDH1-mediated cell adhesion in a process independent from Rho activation. In lymphoid follicles, transmits P2RY8- and S1PR2-dependent signals that lead to inhibition of germinal center (GC) B cell growth and migration outside the GC niche. The chain is Guanine nucleotide-binding protein subunit alpha-13 (GNA13) from Homo sapiens (Human).